A 318-amino-acid polypeptide reads, in one-letter code: Transaldolase (318 aa).

The active-site Schiff-base intermediate with substrate is the lysine 131.

It belongs to the transaldolase family. Type 1 subfamily. Homodimer.

The protein resides in the cytoplasm. The catalysed reaction is D-sedoheptulose 7-phosphate + D-glyceraldehyde 3-phosphate = D-erythrose 4-phosphate + beta-D-fructose 6-phosphate. It participates in carbohydrate degradation; pentose phosphate pathway; D-glyceraldehyde 3-phosphate and beta-D-fructose 6-phosphate from D-ribose 5-phosphate and D-xylulose 5-phosphate (non-oxidative stage): step 2/3. In terms of biological role, transaldolase is important for the balance of metabolites in the pentose-phosphate pathway. The chain is Transaldolase from Cellvibrio japonicus (strain Ueda107) (Pseudomonas fluorescens subsp. cellulosa).